A 734-amino-acid polypeptide reads, in one-letter code: MGASNLLRFGAVTRISTPLLSRRSLATHAAVNPASGTYNLVEKIVQKYAVDLSPGSHVKSGDYVSIRPGTVMTHDNTGPVISKFGSIGATSIYNPDQVVFALDHDVQNKSAKNLEKYSKIESFARKHGIDFYPAGRGIGHQVLVEEGYAFPQTLAVASDSHSNMYGGVGCLGTPIVRTDAAAIWATGQTWWQIPEVVKVELKGELPKGVTGKDVIVALCGYFNKDQVLNAAIEFHGSGLSSLSVEERLAIANMTTEWGALAGLFPTDDVTLSWYEKQIRKRDKLEFQIGSSPSPSNSHPRLNMNRLDELSRTLLRPDSGAVYSKHLTLDLATLVPHVSGPNSVKVSTPLDELTSQNIAINKAYLVSCVNSRASDLKAAADVIRGKKVAPGVEFYVAAASSVVQREAEEAGDWGALMAAGAKPLPAGCGPCIGLGVGLLEDGEVGISATNRNYKGRMGSPNAQAYLASPAVVAASAIEGKICGPSDLDVSLLPPSKGLKYSISTAANAAPADASSTDASAGGVEILDSFPTAFSGPLIFAPQDNLNTDGIYPGKYTYQDDITPEKQAEVVMENYDASFASTVAGLRASSSSSSSTKQGPILIGGYNFGTGSSREQAATALKYAGIPLVLAGSFGDIFQRNAINNGLICLESHQLVQDLTRLYLENEGGVRNSKAILLDESKVHIDSSTGSINLSFKGPDGAKIERTYTAKPAGIGRSVQEIYTAGGLEKWVKQRI.

A mitochondrion-targeting transit peptide spans 1–25 (MGASNLLRFGAVTRISTPLLSRRSL). [4Fe-4S] cluster-binding residues include C367, C427, and C430.

Belongs to the aconitase/IPM isomerase family. [4Fe-4S] cluster serves as cofactor.

The protein localises to the mitochondrion. The enzyme catalyses (2R,3S)-homoisocitrate = cis-homoaconitate + H2O. It functions in the pathway amino-acid biosynthesis; L-lysine biosynthesis via AAA pathway; L-alpha-aminoadipate from 2-oxoglutarate: step 3/5. Catalyzes the reversible hydration of cis-homoaconitate to (2R,3S)-homoisocitrate, a step in the alpha-aminoadipate pathway for lysine biosynthesis. In Mycosarcoma maydis (Corn smut fungus), this protein is Homoaconitase, mitochondrial (LYS4).